Here is a 338-residue protein sequence, read N- to C-terminus: Phenylalanine--tRNA ligase alpha subunit (338 aa).

Residue Glu-252 participates in Mg(2+) binding.

It belongs to the class-II aminoacyl-tRNA synthetase family. Phe-tRNA synthetase alpha subunit type 1 subfamily. Tetramer of two alpha and two beta subunits. The cofactor is Mg(2+).

It localises to the cytoplasm. It catalyses the reaction tRNA(Phe) + L-phenylalanine + ATP = L-phenylalanyl-tRNA(Phe) + AMP + diphosphate + H(+). The sequence is that of Phenylalanine--tRNA ligase alpha subunit from Ectopseudomonas mendocina (strain ymp) (Pseudomonas mendocina).